The following is a 386-amino-acid chain: Homeobox protein Hox-A13 (386 aa).

Residues 320–379 constitute a DNA-binding region (homeobox); that stretch reads GRKKRVPYTKVQLKELEREYATNKFITKDKRRRISATTNLSERQVTIWFQNRRVKEKKVI.

It belongs to the Abd-B homeobox family. As to quaternary structure, binds DNA as a homodimer. Interacts with MEIS1, MEIS2 and MEIS3.

The protein resides in the nucleus. Its function is as follows. Sequence-specific, AT-rich binding transcription factor which is part of a developmental regulatory system that provides cells with specific positional identities on the anterior-posterior axis. The protein is Homeobox protein Hox-A13 (Hoxa13) of Mus musculus (Mouse).